Reading from the N-terminus, the 476-residue chain is Sulfate adenylyltransferase subunit 1 (476 aa).

Residues 24-243 (KSLLRFLTCG…VDVEKEKEAG (220 aa)) enclose the tr-type G domain. The segment at 33–40 (GSVDDGKS) is G1. GTP is bound at residue 33–40 (GSVDDGKS). The G2 stretch occupies residues 91–95 (GITID). The segment at 112-115 (DTPG) is G3. GTP-binding positions include 112–116 (DTPGH) and 167–170 (NKMD). The segment at 167–170 (NKMD) is G4. Residues 205–207 (SAL) are G5.

The protein belongs to the TRAFAC class translation factor GTPase superfamily. Classic translation factor GTPase family. CysN/NodQ subfamily. As to quaternary structure, heterodimer composed of CysD, the smaller subunit, and CysN.

It catalyses the reaction sulfate + ATP + H(+) = adenosine 5'-phosphosulfate + diphosphate. Its pathway is sulfur metabolism; hydrogen sulfide biosynthesis; sulfite from sulfate: step 1/3. Functionally, with CysD forms the ATP sulfurylase (ATPS) that catalyzes the adenylation of sulfate producing adenosine 5'-phosphosulfate (APS) and diphosphate, the first enzymatic step in sulfur assimilation pathway. APS synthesis involves the formation of a high-energy phosphoric-sulfuric acid anhydride bond driven by GTP hydrolysis by CysN coupled to ATP hydrolysis by CysD. This is Sulfate adenylyltransferase subunit 1 from Vibrio vulnificus (strain YJ016).